The following is a 181-amino-acid chain: Oligoribonuclease (181 aa).

The region spanning 8-171 is the Exonuclease domain; sequence LIWLDMEMTG…ADILESIEEM (164 aa). Tyrosine 129 is a catalytic residue.

Belongs to the oligoribonuclease family.

It localises to the cytoplasm. Its function is as follows. 3'-to-5' exoribonuclease specific for small oligoribonucleotides. This is Oligoribonuclease from Chromobacterium violaceum (strain ATCC 12472 / DSM 30191 / JCM 1249 / CCUG 213 / NBRC 12614 / NCIMB 9131 / NCTC 9757 / MK).